The chain runs to 98 residues: DNA-binding protein Fis (98 aa).

The H-T-H motif DNA-binding region spans 74 to 93; the sequence is QTRAATMLGINRGTLRKKLK.

This sequence belongs to the transcriptional regulatory Fis family. Homodimer.

Activates ribosomal RNA transcription. Plays a direct role in upstream activation of rRNA promoters. This is DNA-binding protein Fis from Mannheimia haemolytica (Pasteurella haemolytica).